The primary structure comprises 562 residues: Serine/threonine-protein kinase dst3 (562 aa).

Positions 23–285 (FQIVEVVGSG…AQQLLSHPFI (263 aa)) constitute a Protein kinase domain. ATP-binding positions include 29-37 (VGSGSFGTV) and Lys-59. Residue Asp-154 is the Proton acceptor of the active site. 2 disordered regions span residues 316 to 339 (LEEQ…TRAS) and 366 to 562 (SIMR…NVNI). A compositionally biased stretch (polar residues) spans 322–339 (QRNSSGSKMVSSVPTRAS). 3 stretches are compositionally biased toward low complexity: residues 421–431 (NNNNNNNNTTT), 442–454 (QQQQ…NNNK), and 476–494 (TTPT…TTKT). Over residues 495 to 522 (GSSLNIKPTNNVNRSTISIGQQKSPLQS) the composition is skewed to polar residues. Residues 542–562 (EDEEDEEEFNHEDYEEINVNI) are compositionally biased toward acidic residues.

It belongs to the protein kinase superfamily. STE Ser/Thr protein kinase family. STE20 subfamily. Mg(2+) serves as cofactor.

It carries out the reaction L-seryl-[protein] + ATP = O-phospho-L-seryl-[protein] + ADP + H(+). It catalyses the reaction L-threonyl-[protein] + ATP = O-phospho-L-threonyl-[protein] + ADP + H(+). The polypeptide is Serine/threonine-protein kinase dst3 (Dictyostelium discoideum (Social amoeba)).